The primary structure comprises 523 residues: 2-isopropylmalate synthase (523 aa).

Residues 5 to 267 (VIIFDTTLRD…HTNINHHEIW (263 aa)) enclose the Pyruvate carboxyltransferase domain. Positions 14, 202, 204, and 238 each coordinate Mn(2+). The tract at residues 392–523 (RLDYFNVQSG…QNKENNKETV (132 aa)) is regulatory domain.

Belongs to the alpha-IPM synthase/homocitrate synthase family. LeuA type 1 subfamily. In terms of assembly, homodimer. Mn(2+) serves as cofactor.

It localises to the cytoplasm. It catalyses the reaction 3-methyl-2-oxobutanoate + acetyl-CoA + H2O = (2S)-2-isopropylmalate + CoA + H(+). Its pathway is amino-acid biosynthesis; L-leucine biosynthesis; L-leucine from 3-methyl-2-oxobutanoate: step 1/4. Catalyzes the condensation of the acetyl group of acetyl-CoA with 3-methyl-2-oxobutanoate (2-ketoisovalerate) to form 3-carboxy-3-hydroxy-4-methylpentanoate (2-isopropylmalate). The sequence is that of 2-isopropylmalate synthase from Klebsiella pneumoniae subsp. pneumoniae (strain ATCC 700721 / MGH 78578).